Reading from the N-terminus, the 271-residue chain is Phosphonoacetaldehyde hydrolase (271 aa).

Residue D12 is the Nucleophile of the active site. Mg(2+)-binding residues include D12 and A14. Catalysis depends on K54, which acts as the Schiff-base intermediate with substrate. D188 lines the Mg(2+) pocket.

This sequence belongs to the HAD-like hydrolase superfamily. PhnX family. As to quaternary structure, homodimer. Requires Mg(2+) as cofactor.

The enzyme catalyses phosphonoacetaldehyde + H2O = acetaldehyde + phosphate + H(+). Its function is as follows. Involved in phosphonate degradation. This chain is Phosphonoacetaldehyde hydrolase, found in Vibrio campbellii (strain ATCC BAA-1116).